A 301-amino-acid polypeptide reads, in one-letter code: Probable 2-dehydro-3-deoxy-D-pentonate aldolase YjhH (301 aa).

Residues Thr-46 and Tyr-109 each act as charge relay system in the active site. Tyr-135 serves as the catalytic Proton donor. Lys-164 acts as the Schiff-base intermediate with substrate in catalysis.

The protein belongs to the DapA family.

The protein resides in the cytoplasm. The catalysed reaction is 2-dehydro-3-deoxy-D-arabinonate = glycolaldehyde + pyruvate. In terms of biological role, functions as a 2-dehydro-3-deoxy-D-pentonate aldolase. This is Probable 2-dehydro-3-deoxy-D-pentonate aldolase YjhH (yjhH) from Escherichia coli (strain K12).